A 91-amino-acid chain; its full sequence is Small ribosomal subunit protein bS20 (91 aa).

A compositionally biased stretch (basic and acidic residues) spans 1-21 (MPLHKSAEKRLRQSARRNERN). Disordered stretches follow at residues 1 to 25 (MPLH…RARK) and 71 to 91 (NKAS…AQKD).

Belongs to the bacterial ribosomal protein bS20 family.

Functionally, binds directly to 16S ribosomal RNA. The protein is Small ribosomal subunit protein bS20 of Prosthecochloris aestuarii (strain DSM 271 / SK 413).